The following is a 554-amino-acid chain: Outer envelope protein 61 (554 aa).

Over 1 to 525 (MFNGLMDPEM…GMEKAKKAKK (525 aa)) the chain is Cytoplasmic. 2 TPR repeats span residues 103-136 (AQMLKKQGNELHSRGNFSDAAEKYLRAKNNLKEI) and 180-213 (VKALYRRGQAYRDLGLFEDAVSDLSKAHEVSPED). Disordered regions lie at residues 245-269 (TEENNVTSGENKKPSKEANGHAQGV) and 395-439 (APAS…PSAP). Positions 254-263 (ENKKPSKEAN) are enriched in basic and acidic residues. Over residues 412-423 (SLGASGSSSGNS) the composition is skewed to low complexity. A helical membrane pass occupies residues 526 to 546 (WLFGKGGLIFAILMLVLAMVL). At 547-554 (HRLGYIGN) the chain is on the lumenal side.

As to quaternary structure, interacts (via TPR region) with HSP70-1, but not with HSP90-2. Interacts with ERDJ2A and ERDJ2B. In the ER membrane, associates with ERDJ2 in membrane complexes of 140 and 200 kDa and specifically interacts with the HSP70 and HSP90 chaperones via its TPR domain. Ubiquitous. Highest expression in leaves and lowest in roots.

The protein resides in the endoplasmic reticulum membrane. Its subcellular location is the plastid. It is found in the chloroplast outer membrane. Its function is as follows. Plays a role in protein import into the endoplasmic reticulum (ER). May function as chaperone docking protein during post-translational protein translocation into the ER. Chaperone receptor mediating Hsp70-dependent protein targeting to chloroplasts. Interacts specifically with some chloroplast precursors, but not with mitochondrial precursors. Able to select precursors for delivery to the chloroplast translocase independently of Hsp70. The protein is Outer envelope protein 61 (OEP61) of Arabidopsis thaliana (Mouse-ear cress).